Reading from the N-terminus, the 282-residue chain is NADPH-dependent 7-cyano-7-deazaguanine reductase (282 aa).

88–90 (IES) contacts substrate. 90–91 (SK) contributes to the NADPH binding site. The active-site Thioimide intermediate is the Cys190. The Proton donor role is filled by Asp197. A substrate-binding site is contributed by 229 to 230 (HE). NADPH is bound at residue 258-259 (RG).

Belongs to the GTP cyclohydrolase I family. QueF type 2 subfamily. As to quaternary structure, homodimer.

Its subcellular location is the cytoplasm. It catalyses the reaction 7-aminomethyl-7-carbaguanine + 2 NADP(+) = 7-cyano-7-deazaguanine + 2 NADPH + 3 H(+). Its pathway is tRNA modification; tRNA-queuosine biosynthesis. Functionally, catalyzes the NADPH-dependent reduction of 7-cyano-7-deazaguanine (preQ0) to 7-aminomethyl-7-deazaguanine (preQ1). This Salmonella heidelberg (strain SL476) protein is NADPH-dependent 7-cyano-7-deazaguanine reductase.